We begin with the raw amino-acid sequence, 81 residues long: UPF0180 protein BLi01634/BL05144 (81 aa).

The protein belongs to the UPF0180 family.

This Bacillus licheniformis (strain ATCC 14580 / DSM 13 / JCM 2505 / CCUG 7422 / NBRC 12200 / NCIMB 9375 / NCTC 10341 / NRRL NRS-1264 / Gibson 46) protein is UPF0180 protein BLi01634/BL05144.